We begin with the raw amino-acid sequence, 32 residues long: Photosystem I reaction center subunit XII (32 aa).

Residues 9-31 (VYVALVSALITSFLAVRLGLALY) traverse the membrane as a helical segment.

The protein belongs to the PsaM family.

It is found in the plastid. It localises to the chloroplast thylakoid membrane. The sequence is that of Photosystem I reaction center subunit XII from Chaetosphaeridium globosum (Charophycean green alga).